The following is a 172-amino-acid chain: Adenine phosphoribosyltransferase (172 aa).

Belongs to the purine/pyrimidine phosphoribosyltransferase family. As to quaternary structure, homodimer.

It is found in the cytoplasm. The catalysed reaction is AMP + diphosphate = 5-phospho-alpha-D-ribose 1-diphosphate + adenine. The protein operates within purine metabolism; AMP biosynthesis via salvage pathway; AMP from adenine: step 1/1. Functionally, catalyzes a salvage reaction resulting in the formation of AMP, that is energically less costly than de novo synthesis. This is Adenine phosphoribosyltransferase from Synechococcus sp. (strain CC9605).